Here is a 525-residue protein sequence, read N- to C-terminus: MKVLTTALLLVTLQCSHALSPTNCDASEPLAEKVLDLINKGRRSGYVFELLRVSDAHLDRAGTATVYYLALDVIESDCWVLSTKAQDDCLPSRWQSEIVIGQCKVIATRYSNESQDLSVNGYNCTTSSVSSALRNTKDSPVLLDFFEDSELYRKQARKALDKYKTDNGDFASFRVERAERVIRARGGERTNYYVEFSMRNCSTQHFPRSPLVFGFCRALLSYSIETSDLETPDSIDINCEVFNIEDHKDTSDMKPHWGHERPLCDKHLCKLSGSRDHHHTHKTDKLGCPPPPEGKDNSDRPRLQEGALPQLPPGYPPHSGANRTHRPSYNHSCNEHPCHGHRPHGHHPHSHHPPGHHSHGHHPHGHHPHSHHSHGHHPPGHHPHGHHPHGHHPHGHHPHGHHPHGHDFLDYGPCDPPSNSQELKGQYHRGYGPPHGHSRKRGPGKGLFPFHHQQIGYVYRLPPLNIGEVLTLPEANFPSFSLPNCNRSLQPEIQPFPQTASRSCPGKFESEFPQISKFFGYTPPK.

The first 18 residues, 1–18 (MKVLTTALLLVTLQCSHA), serve as a signal peptide directing secretion. The region spanning 19–122 (LSPTNCDASE…ESQDLSVNGY (104 aa)) is the Cystatin 1 domain. 5 cysteine pairs are disulfide-bonded: Cys-24–Cys-504, Cys-78–Cys-89, Cys-103–Cys-124, Cys-201–Cys-414, and Cys-216–Cys-239. The segment at 41 to 84 (GRRSGYVFELLRVSDAHLDRAGTATVYYLALDVIESDCWVLSTK) is interaction with ATP5F1A. Residues Asn-112, Asn-123, and Asn-200 are each glycosylated (N-linked (GlcNAc...) asparagine). The Cystatin 2 domain occupies 135–240 (NTKDSPVLLD…TPDSIDINCE (106 aa)). Residues 273–447 (GSRDHHHTHK…SRKRGPGKGL (175 aa)) form a disordered region. Over residues 293–303 (EGKDNSDRPRL) the composition is skewed to basic and acidic residues. 2 N-linked (GlcNAc...) asparagine glycosylation sites follow: Asn-322 and Asn-330. Residues 339 to 404 (HGHRPHGHHP…GHHPHGHHPH (66 aa)) show a composition bias toward basic residues. Positions 345-379 (GHHPHSHHPPGHHSHGHHPHGHHPHSHHSHGHHPP) are necessary for endothelial cell focal adhesions and anti-angiogenic activities. Ser-438 bears the Phosphoserine mark.

Interacts with THBS1 (via the TSP type I repeats); the interaction blocks the antiangiogenic effect of THBS1 with CD36. Interacts with HPSE; the interaction is enhanced at acidic pH, partially inhibits binding of HPSE to cell surface receptors and modulates its enzymatic activity. Interacts (via the HRR domain) with TMP1; the interaction partially mediates the antiangiogenic properties of HRG. Interacts with kappa and lambda light chains of IgG molecules. Interacts with ATP5F1A; the interaction occurs on the surface of T-cells and alters their cell morphology in concert with CONA. Binds IgG molecules containing kappa and lambda light chains and inhibits the formation of insoluble immunoglobulin complexes. Interacts with F12; the interaction, which is enhanced in the presence of zinc ions and inhibited by heparin-binding to HRG, inhibits factor XII autoactivation and contact-initiated coagulation. Interacts with PLG (via its Kringle domains); the interaction tethers PLG to the cell surface and enhances its activation. Interacts (via the HRR domain) with TPM1; the interaction appears to contribute to the antiangiogenic properties of the HRR domain. Interacts with THBS2; the interaction blocks the antiangiogenic effect of THBS2 with CD36. Zn(2+) serves as cofactor. Post-translationally, proteolytic cleavage produces several HRG fragments which are mostly disulfide-linked and, therefore, not released. Cleavage by plasmin is inhibited in the presence of heparin, zinc ions or in an acidic environment. Cleavage reduces binding of HRG to heparan sulfate, but enhances the ability of HRG to bind and tether plasminogen to the cell surface. On platelet activation, releases a 33 kDa antiangiogenic peptide which encompasses the HRR. Also cleaved in the C-terminal by plasmin. In terms of processing, N-glycosylated. As to expression, expressed in liver, blood plasma, serum and in platelets. Also present in fibrin clots, wound fluid from acute wounds and chronic leg ulcers.

It is found in the secreted. Functionally, plasma glycoprotein that binds a number of ligands such as heme, heparin, heparan sulfate, thrombospondin, plasminogen, and divalent metal ions. Binds heparin and heparin/glycosaminoglycans in a zinc-dependent manner. Binds heparan sulfate on the surface of liver, lung, kidney and heart endothelial cells. Binds to N-sulfated polysaccharide chains on the surface of liver endothelial cells. Inhibits rosette formation. Acts as an adapter protein and is implicated in regulating many processes such as immune complex and pathogen clearance, cell chemotaxis, cell adhesion, angiogenesis, coagulation and fibrinolysis. Mediates clearance of necrotic cells through enhancing the phagocytosis of necrotic cells in a heparan sulfate-dependent pathway. This process can be regulated by the presence of certain HRG ligands such as heparin and zinc ions. Binds to IgG subclasses of immunoglobins containing kappa and lambda light chains with different affinities regulating their clearance and inhibiting the formation of insoluble immune complexes. Tethers plasminogen to the cell surface. Binds T-cells and alters the cell morphology. Acts as a regulator of the vascular endothelial growth factor (VEGF) signaling pathway; inhibits endothelial cell motility by reducing VEGF-induced complex formation between PXN/paxillin and ILK/integrin-linked protein kinase and by promoting inhibition of VEGF-induced tyrosine phosphorylation of focal adhesion kinases and alpha-actinins in endothelial cells. Also plays a role in the regulation of tumor angiogenesis and tumor immune surveillance. Normalizes tumor vessels and promotes antitumor immunity by polarizing tumor-associated macrophages, leading to decreased tumor growth and metastasis. Modulates angiogenesis by blocking the CD6-mediated antiangiongenic effect of thrombospondins, THBS1 and THBS2. This Mus musculus (Mouse) protein is Histidine-rich glycoprotein (Hrg).